A 525-amino-acid polypeptide reads, in one-letter code: Lysine--tRNA ligase (525 aa).

Mg(2+) is bound by residues glutamate 419 and glutamate 426.

Belongs to the class-II aminoacyl-tRNA synthetase family. Homodimer. Requires Mg(2+) as cofactor.

It is found in the cytoplasm. The enzyme catalyses tRNA(Lys) + L-lysine + ATP = L-lysyl-tRNA(Lys) + AMP + diphosphate. This is Lysine--tRNA ligase (lysS) from Deinococcus radiodurans (strain ATCC 13939 / DSM 20539 / JCM 16871 / CCUG 27074 / LMG 4051 / NBRC 15346 / NCIMB 9279 / VKM B-1422 / R1).